A 39-amino-acid chain; its full sequence is Colipase (39 aa).

2 disulfides stabilise this stretch: cysteine 16–cysteine 27 and cysteine 22–cysteine 38.

Belongs to the colipase family. Forms a 1:1 stoichiometric complex with pancreatic lipase. As to expression, expressed by the pancreas.

It is found in the secreted. Colipase is a cofactor of pancreatic lipase. It allows the lipase to anchor itself to the lipid-water interface. Without colipase the enzyme is washed off by bile salts, which have an inhibitory effect on the lipase. The protein is Colipase of Squalus acanthias (Spiny dogfish).